The sequence spans 67 residues: MAILRTSEIRTMTIEERADELENLKNELVRERALTSAGGAPDNPGRIGEIRRTIARIKTIQHELNEI.

Belongs to the universal ribosomal protein uL29 family.

The sequence is that of Large ribosomal subunit protein uL29 from Methanosarcina mazei (strain ATCC BAA-159 / DSM 3647 / Goe1 / Go1 / JCM 11833 / OCM 88) (Methanosarcina frisia).